The primary structure comprises 1383 residues: DNA-directed RNA polymerase subunit beta (1383 aa).

Belongs to the RNA polymerase beta chain family. The RNAP catalytic core consists of 2 alpha, 1 beta, 1 beta' and 1 omega subunit. When a sigma factor is associated with the core the holoenzyme is formed, which can initiate transcription.

The catalysed reaction is RNA(n) + a ribonucleoside 5'-triphosphate = RNA(n+1) + diphosphate. Its function is as follows. DNA-dependent RNA polymerase catalyzes the transcription of DNA into RNA using the four ribonucleoside triphosphates as substrates. The chain is DNA-directed RNA polymerase subunit beta from Bartonella bacilliformis (strain ATCC 35685 / KC583 / Herrer 020/F12,63).